A 70-amino-acid polypeptide reads, in one-letter code: Toxin Isom2 (70 aa).

Residues 2–65 form the LCN-type CS-alpha/beta domain; sequence KNGYAVDSSG…ISDTRKKYCD (64 aa). Intrachain disulfides connect cysteine 16/cysteine 37, cysteine 22/cysteine 42, cysteine 26/cysteine 44, and cysteine 38/cysteine 64.

As to expression, expressed by the venom gland.

Its subcellular location is the secreted. Functionally, excitatory insect beta-toxins induce a spastic paralysis. They bind voltage-independently at site-4 of sodium channels (Nav) and shift the voltage of activation toward more negative potentials thereby affecting sodium channel activation and promoting spontaneous and repetitive firing. The protein is Toxin Isom2 of Isometrus vittatus (Bark scorpion).